The following is a 399-amino-acid chain: UDP-N-acetylglucosamine--N-acetylmuramyl-(pentapeptide) pyrophosphoryl-undecaprenol N-acetylglucosamine transferase (399 aa).

Residues 29–31, Asn-148, Arg-185, Ser-219, and Gln-318 each bind UDP-N-acetyl-alpha-D-glucosamine; that span reads TAG.

Belongs to the glycosyltransferase 28 family. MurG subfamily.

Its subcellular location is the cell membrane. It carries out the reaction di-trans,octa-cis-undecaprenyl diphospho-N-acetyl-alpha-D-muramoyl-L-alanyl-D-glutamyl-meso-2,6-diaminopimeloyl-D-alanyl-D-alanine + UDP-N-acetyl-alpha-D-glucosamine = di-trans,octa-cis-undecaprenyl diphospho-[N-acetyl-alpha-D-glucosaminyl-(1-&gt;4)]-N-acetyl-alpha-D-muramoyl-L-alanyl-D-glutamyl-meso-2,6-diaminopimeloyl-D-alanyl-D-alanine + UDP + H(+). The protein operates within cell wall biogenesis; peptidoglycan biosynthesis. In terms of biological role, cell wall formation. Catalyzes the transfer of a GlcNAc subunit on undecaprenyl-pyrophosphoryl-MurNAc-pentapeptide (lipid intermediate I) to form undecaprenyl-pyrophosphoryl-MurNAc-(pentapeptide)GlcNAc (lipid intermediate II). The sequence is that of UDP-N-acetylglucosamine--N-acetylmuramyl-(pentapeptide) pyrophosphoryl-undecaprenol N-acetylglucosamine transferase from Mycobacterium ulcerans (strain Agy99).